Reading from the N-terminus, the 285-residue chain is NAD kinase (285 aa).

D67 acts as the Proton acceptor in catalysis. Residues 67-68 (DG), 141-142 (ND), R152, K169, D171, 182-187 (TGYSLS), and Q242 contribute to the NAD(+) site.

The protein belongs to the NAD kinase family. A divalent metal cation serves as cofactor.

It localises to the cytoplasm. It carries out the reaction NAD(+) + ATP = ADP + NADP(+) + H(+). Involved in the regulation of the intracellular balance of NAD and NADP, and is a key enzyme in the biosynthesis of NADP. Catalyzes specifically the phosphorylation on 2'-hydroxyl of the adenosine moiety of NAD to yield NADP. This is NAD kinase from Trichlorobacter lovleyi (strain ATCC BAA-1151 / DSM 17278 / SZ) (Geobacter lovleyi).